A 573-amino-acid chain; its full sequence is Splicing factor U2af large subunit A (573 aa).

Positions 1-175 (MSEFEDHEGN…KSKQRVSGFD (175 aa)) are disordered. The span at 22–93 (NGGRDGEIED…ERSRDKDRDH (72 aa)) shows a compositional bias: basic and acidic residues. Basic residues predominate over residues 94–105 (RERHHRSSRHRD). Over residues 106–141 (HSRERGERRERGGRDDDDYRRSRDRDHDRRRDDRGG) the composition is skewed to basic and acidic residues. The span at 159–169 (TRSRSPSKSKQ) shows a compositional bias: basic residues. 3 consecutive RRM domains span residues 239-322 (RRVY…RPSD), 359-437 (DRIF…RANQ), and 478-564 (QVVT…YPED).

Belongs to the splicing factor SR family. In terms of assembly, component of the spliceosome. Interacts with SUA. Interacts with SF1 in the nucleus.

The protein localises to the nucleus. Functionally, necessary for the splicing of pre-mRNA. This is Splicing factor U2af large subunit A from Arabidopsis thaliana (Mouse-ear cress).